The primary structure comprises 329 residues: Tryptophan--tRNA ligase (329 aa).

ATP is bound by residues 9-11 (QPS) and 17-18 (GN). The 'HIGH' region signature appears at 10-18 (PSGIPTIGN). Asp133 provides a ligand contact to L-tryptophan. ATP contacts are provided by residues 145–147 (GDD), Val184, and 193–197 (KMSKS). The 'KMSKS' region motif lies at 193–197 (KMSKS).

This sequence belongs to the class-I aminoacyl-tRNA synthetase family. As to quaternary structure, homodimer.

It localises to the cytoplasm. It carries out the reaction tRNA(Trp) + L-tryptophan + ATP = L-tryptophyl-tRNA(Trp) + AMP + diphosphate + H(+). In terms of biological role, catalyzes the attachment of tryptophan to tRNA(Trp). The protein is Tryptophan--tRNA ligase of Staphylococcus aureus (strain MRSA252).